A 223-amino-acid polypeptide reads, in one-letter code: V-type ATP synthase subunit D (223 aa).

Residues 203–223 (AREAEEEGGRPNPQVEIGAGL) form a disordered region.

This sequence belongs to the V-ATPase D subunit family.

In terms of biological role, produces ATP from ADP in the presence of a proton gradient across the membrane. The chain is V-type ATP synthase subunit D from Thermus thermophilus (strain ATCC BAA-163 / DSM 7039 / HB27).